We begin with the raw amino-acid sequence, 185 residues long: Probable RNA 2'-phosphotransferase (185 aa).

It belongs to the KptA/TPT1 family.

Functionally, removes the 2'-phosphate from RNA via an intermediate in which the phosphate is ADP-ribosylated by NAD followed by a presumed transesterification to release the RNA and generate ADP-ribose 1''-2''-cyclic phosphate (APPR&gt;P). May function as an ADP-ribosylase. In Bacillus thuringiensis subsp. konkukian (strain 97-27), this protein is Probable RNA 2'-phosphotransferase.